The chain runs to 1405 residues: MKDLLKFLKQQSKTEEFNGIKIGLASPDLIRSWSFGEVKKPETINYRTFKPEREGLFCARIFGPVKDYECLCGKYKRLKHRGVICEKCGVEVTQTKVRRERMGHIELASPVAHIWFLKSLPSRIGLMLDMTLRDIERVLYFESFVVIEPGMTSLERGQMLTEETYLDALEEYGDEFEAKMGAEAVLELLRAIDLAKEIEQMREELPSINSETRRKKVTKRLKLMEAFFTSGNKPEWMILKVLPVLPPDLRPLVPLDGGRFATSDLNDLYRRVINRNNRLKRLLDLAAPDIIVRNEKRMLQESVDALLDNGRRGRAITGSNKRPLKSLADMIKGKQGRFRQNLLGKRVDYSGRSVITVGPTLRLHQCGLPKKMALELFKPFIYGKLEGRGLATTIKAAKKMVEREVAEVWDVLDEVIREHPVMLNRAPTLHRLGIQAFEPVLIEGKAIQLHPLVCAAYNADFDGDQMAVHVPLTLEAQLEARALMMSTNNILSPANGEPVITPSQDVVLGLYYTSRERINGRGEGMAFMSVAEVEKAYATGAAELHARVKVRITETIIGDDGERTEQRRIVDTTVGRALLSLILPAGLSFDLVNQNMGKKQISKLLNTCYRQLGLKDTVIFADQLMYTGFRFATISGASVGIDDMVIPDEKYTLVADAEAEVLEIQEQFQSGLVTAGERYNKVIDIWASANEKVSKAMMENLSTETVINRDGVEEKQASFNSIYMMADSGARGSAAQIRQLAGMRGLMAKPDGSIIETPITANFREGLNVLQYFISTHGARKGLADTALKTANSGYLTRRLVDVAQDLVVIEDDCGTHEGLTMKPLIEGGDVVEPLRERVLGRVVAVDVFYPGTEDVLAPRNTLLDEAWCDKLEEHSIDEVIVRSVITCDTDFGVCAACYGRDLARGHIINHGEAIGVVAAQSIGEPGTQLTMRTFHIGGAASRASAENNVQVKNSGSLKLHNAKHVTNSDGKLVIVSRSSELAIIDELGREKERYKVPYGTVLEKLEEAAVEAGDIIANWDPHTHPIISEVAGSIKFVDMIDGVTMTRQTDELTGLSSIVILDVGQRGTAGKEMRPMIRLLGANGSDLMIPGTEVPAQYFLPGSAIVNLDDNAQIAVGDALARIPQESSKTRDITGGLPRVADLFEARKPKEPAILAEISGTISFGKETKGKRRLVITPADGGDQYEEMIPKWRNLNVFEGEKVERGEVIADGPEAAHDILRLRGIHNVANYIVNEVQDVYRLQGVKINDKHIEVIIRQMLRKCLITSAGDTEFLEGEQVEVSRVKIANRELIAQGKVPATFERELLGITKASLATESFISAASFQETTRVLTEAAVGGKSDQLRGLKENVIVGRLIPAGTGYAYHKTRNDARAKKDEPVVVNKVTASEAEQNLADLLNMAGSQD.

4 residues coordinate Zn(2+): C70, C72, C85, and C88. Residues D460, D462, and D464 each coordinate Mg(2+). Residues C814, C888, C895, and C898 each coordinate Zn(2+).

This sequence belongs to the RNA polymerase beta' chain family. As to quaternary structure, the RNAP catalytic core consists of 2 alpha, 1 beta, 1 beta' and 1 omega subunit. When a sigma factor is associated with the core the holoenzyme is formed, which can initiate transcription. It depends on Mg(2+) as a cofactor. Zn(2+) is required as a cofactor.

The catalysed reaction is RNA(n) + a ribonucleoside 5'-triphosphate = RNA(n+1) + diphosphate. In terms of biological role, DNA-dependent RNA polymerase catalyzes the transcription of DNA into RNA using the four ribonucleoside triphosphates as substrates. The protein is DNA-directed RNA polymerase subunit beta' of Shewanella putrefaciens (strain CN-32 / ATCC BAA-453).